A 444-amino-acid polypeptide reads, in one-letter code: Acyl-CoA (8-3)-desaturase (444 aa).

Position 1 is an N-acetylmethionine (Met1). Residues 1–121 lie on the Cytoplasmic side of the membrane; that stretch reads MAPDPVAAET…FRELRATVER (121 aa). The region spanning 17–94 is the Cytochrome b5 heme-binding domain; sequence PRYFTWDEVA…MNSLLIGELS (78 aa). A helical membrane pass occupies residues 122-142; that stretch reads MGLMKANHVFFLLYLLHILLL. Topologically, residues 143–145 are lumenal; it reads DGA. A helical transmembrane segment spans residues 146–170; sequence AWLTLWVFGTSFLPFLLCAVLLSAV. At 171–267 the chain is on the cytoplasmic side; sequence QAQAGWLQHD…PYNHQHKYFF (97 aa). Positions 179 to 183 match the Histidine box-1 motif; it reads HDFGH. A Histidine box-2 motif is present at residues 216-220; that stretch reads HFQHH. The chain crosses the membrane as a helical span at residues 268–288; sequence LIGPPALLPLYFQWYIFYFVI. Topologically, residues 289 to 305 are lumenal; that stretch reads QRKKWVDLAWMITFYVR. Residues 306-326 traverse the membrane as a helical segment; sequence FFLTYVPLLGLKAFLGLFFIV. Over 327 to 444 the chain is Cytoplasmic; it reads RFLESNWFVW…QLWLDAYLHQ (118 aa). The short motif at 382–386 is the Histidine box-3 element; sequence QIEHH.

This sequence belongs to the fatty acid desaturase type 1 family. As to expression, widely expressed, with highest levels in liver, brain, adrenal gland and heart. Highly expressed in fetal liver and brain.

Its subcellular location is the endoplasmic reticulum membrane. It is found in the mitochondrion. The catalysed reaction is (8Z,11Z,14Z)-eicosatrienoyl-CoA + 2 Fe(II)-[cytochrome b5] + O2 + 2 H(+) = (5Z,8Z,11Z,14Z)-eicosatetraenoyl-CoA + 2 Fe(III)-[cytochrome b5] + 2 H2O. The enzyme catalyses (8Z,11Z,14Z,17Z)-eicosatetraenoyl-CoA + 2 Fe(II)-[cytochrome b5] + O2 + 2 H(+) = (5Z,8Z,11Z,14Z,17Z)-eicosapentaenoyl-CoA + 2 Fe(III)-[cytochrome b5] + 2 H2O. It carries out the reaction (11E)-octadecenoyl-CoA + 2 Fe(II)-[cytochrome b5] + O2 + 2 H(+) = (5Z,11E)-octadecadienoyl-CoA + 2 Fe(III)-[cytochrome b5] + 2 H2O. It functions in the pathway lipid metabolism; polyunsaturated fatty acid biosynthesis. Acts as a front-end fatty acyl-coenzyme A (CoA) desaturase that introduces a cis double bond at carbon 5 located between a preexisting double bond and the carboxyl end of the fatty acyl chain. Involved in biosynthesis of highly unsaturated fatty acids (HUFA) from the essential polyunsaturated fatty acids (PUFA) linoleic acid (LA) (18:2n-6) and alpha-linolenic acid (ALA) (18:3n-3) precursors. Specifically, desaturates dihomo-gamma-linoleoate (DGLA) (20:3n-6) and eicosatetraenoate (ETA) (20:4n-3) to generate arachidonate (AA) (20:4n-6) and eicosapentaenoate (EPA) (20:5n-3), respectively. As a rate limiting enzyme for DGLA (20:3n-6) and AA (20:4n-6)-derived eicosanoid biosynthesis, controls the metabolism of inflammatory lipids like prostaglandin E2, critical for efficient acute inflammatory response and maintenance of epithelium homeostasis. Contributes to membrane phospholipid biosynthesis by providing AA (20:4n-6) as a major acyl chain esterified into phospholipids. In particular, regulates phosphatidylinositol-4,5-bisphosphate levels, modulating inflammatory cytokine production in T-cells. Also desaturates (11E)-octadecenoate (trans-vaccenoate)(18:1n-9), a metabolite in the biohydrogenation pathway of LA (18:2n-6). In terms of biological role, does not exhibit any catalytic activity toward 20:3n-6, but it may enhance FADS2 activity. This Homo sapiens (Human) protein is Acyl-CoA (8-3)-desaturase.